A 594-amino-acid polypeptide reads, in one-letter code: Zinc finger protein 467 (594 aa).

The segment at 1 to 70 (MRETLEALNS…HTEQAEAPCM (70 aa)) is disordered. K97 is covalently cross-linked (Glycyl lysine isopeptide (Lys-Gly) (interchain with G-Cter in SUMO2)). 12 consecutive C2H2-type zinc fingers follow at residues 160-182 (YGCE…QRLH), 188-210 (CACP…QRSH), 216-238 (FPCS…LRTH), 244-266 (YPCA…QKTH), 272-294 (FPCT…QRIH), 300-322 (YQCT…QRVH), 355-377 (FACS…QSLH), 430-452 (FFCP…RRVH), 458-480 (FACA…SRAH), 486-508 (FACA…QAVH), 514-536 (HACA…QAIH), and 542-564 (FSCP…QRIH). Residues 313-350 (QHLVRHQRVHDAASRTRSSPDIPATPHPPTASLAPSPT) form a disordered region. K368 participates in a covalent cross-link: Glycyl lysine isopeptide (Lys-Gly) (interchain with G-Cter in SUMO2).

This sequence belongs to the krueppel C2H2-type zinc-finger protein family. As to quaternary structure, interacts with STAT3. Enhances STAT3 activity by keeping it in the nucleus.

It is found in the nucleus. In terms of biological role, transcription factor that promotes adipocyte differentiation and suppresses osteoblast differentiation in the bone marrow. Enhances the osteoclast-supporting ability of stromal cells. Binds with STAT3 the consensus sequence 5'-CTTCTGGGAAGA-3' of the acute phase response element (APRE). Transactivates several promoters including FOS, OSM and PPARG. Recruits a histone deacetylase complex. The chain is Zinc finger protein 467 (Znf467) from Rattus norvegicus (Rat).